The sequence spans 569 residues: Proline--tRNA ligase (569 aa).

This sequence belongs to the class-II aminoacyl-tRNA synthetase family. ProS type 1 subfamily. As to quaternary structure, homodimer.

It is found in the cytoplasm. It catalyses the reaction tRNA(Pro) + L-proline + ATP = L-prolyl-tRNA(Pro) + AMP + diphosphate. Its function is as follows. Catalyzes the attachment of proline to tRNA(Pro) in a two-step reaction: proline is first activated by ATP to form Pro-AMP and then transferred to the acceptor end of tRNA(Pro). As ProRS can inadvertently accommodate and process non-cognate amino acids such as alanine and cysteine, to avoid such errors it has two additional distinct editing activities against alanine. One activity is designated as 'pretransfer' editing and involves the tRNA(Pro)-independent hydrolysis of activated Ala-AMP. The other activity is designated 'posttransfer' editing and involves deacylation of mischarged Ala-tRNA(Pro). The misacylated Cys-tRNA(Pro) is not edited by ProRS. This is Proline--tRNA ligase from Endomicrobium trichonymphae.